The chain runs to 450 residues: tRNA modification GTPase MnmE (450 aa).

The (6S)-5-formyl-5,6,7,8-tetrahydrofolate site is built by Arg-25, Glu-83, and Lys-122. The region spanning 218–377 is the TrmE-type G domain; sequence GFKVAIIGKP…QMEALLDSIG (160 aa). Asn-228 lines the K(+) pocket. GTP contacts are provided by residues 228–233, 247–253, and 272–275; these read NVGKSS, SDIAGTT, and DTAG. Ser-232 serves as a coordination point for Mg(2+). K(+) is bound by residues Ser-247, Ile-249, and Thr-252. Position 253 (Thr-253) interacts with Mg(2+). Lys-450 provides a ligand contact to (6S)-5-formyl-5,6,7,8-tetrahydrofolate.

The protein belongs to the TRAFAC class TrmE-Era-EngA-EngB-Septin-like GTPase superfamily. TrmE GTPase family. As to quaternary structure, homodimer. Heterotetramer of two MnmE and two MnmG subunits. Requires K(+) as cofactor.

It is found in the cytoplasm. Its function is as follows. Exhibits a very high intrinsic GTPase hydrolysis rate. Involved in the addition of a carboxymethylaminomethyl (cmnm) group at the wobble position (U34) of certain tRNAs, forming tRNA-cmnm(5)s(2)U34. This is tRNA modification GTPase MnmE from Sulfurovum sp. (strain NBC37-1).